Here is a 311-residue protein sequence, read N- to C-terminus: Bifunctional pinoresinol-lariciresinol reductase (311 aa).

Residues 10–16, Arg-35, and Lys-44 each bind NADP(+); that span reads GGTGYLG. The Proton acceptor role is filled by Lys-138. Arg-142 provides a ligand contact to NADP(+). His-270 serves as a coordination point for substrate.

The protein belongs to the NmrA-type oxidoreductase family. Isoflavone reductase subfamily. In terms of assembly, dimer. In terms of tissue distribution, expressed in rhizomes, stems, and leaves.

It carries out the reaction (-)-secoisolariciresinol + NADP(+) = (+)-lariciresinol + NADPH + H(+). The catalysed reaction is (+)-lariciresinol + NADP(+) = (+)-pinoresinol + NADPH + H(+). It functions in the pathway aromatic compound metabolism; phenylpropanoid biosynthesis. Functionally, reductase involved in lignan biosynthesis. Also involved in the biosynthesis of etoposide, a chemotherapeutic compound of the topoisomerase inhibitor family. Catalyzes the enantioselective sequential conversion of (+)-pinoresinol into (+)-lariciresinol and of (+)-lariciresinol into (-)-secoisolariciresinol. Abstracts the 4R-hydride from the NADPH cofactor during catalysis. This chain is Bifunctional pinoresinol-lariciresinol reductase, found in Sinopodophyllum hexandrum (Himalayan may apple).